Here is a 342-residue protein sequence, read N- to C-terminus: Ferrochelatase (342 aa).

Fe cation-binding residues include His-188 and Glu-268.

The protein belongs to the ferrochelatase family.

It localises to the cytoplasm. The enzyme catalyses heme b + 2 H(+) = protoporphyrin IX + Fe(2+). It participates in porphyrin-containing compound metabolism; protoheme biosynthesis; protoheme from protoporphyrin-IX: step 1/1. Functionally, catalyzes the ferrous insertion into protoporphyrin IX. The chain is Ferrochelatase from Rickettsia typhi (strain ATCC VR-144 / Wilmington).